A 314-amino-acid polypeptide reads, in one-letter code: ATP synthase gamma chain (314 aa).

It belongs to the ATPase gamma chain family. F-type ATPases have 2 components, CF(1) - the catalytic core - and CF(0) - the membrane proton channel. CF(1) has five subunits: alpha(3), beta(3), gamma(1), delta(1), epsilon(1). CF(0) has three main subunits: a, b and c.

It is found in the cellular thylakoid membrane. Produces ATP from ADP in the presence of a proton gradient across the membrane. The gamma chain is believed to be important in regulating ATPase activity and the flow of protons through the CF(0) complex. The sequence is that of ATP synthase gamma chain from Picosynechococcus sp. (strain ATCC 27264 / PCC 7002 / PR-6) (Agmenellum quadruplicatum).